Reading from the N-terminus, the 833-residue chain is Leucine--tRNA ligase (833 aa).

The 'HIGH' region motif lies at 41–52 (PYPSGAGLHVGH). Positions 610 to 614 (KMSKS) match the 'KMSKS' region motif. Lysine 613 lines the ATP pocket.

The protein belongs to the class-I aminoacyl-tRNA synthetase family.

The protein localises to the cytoplasm. The catalysed reaction is tRNA(Leu) + L-leucine + ATP = L-leucyl-tRNA(Leu) + AMP + diphosphate. In Streptococcus pyogenes serotype M5 (strain Manfredo), this protein is Leucine--tRNA ligase.